The primary structure comprises 484 residues: Glutamyl-tRNA(Gln) amidotransferase subunit A (484 aa).

Catalysis depends on charge relay system residues K76 and S151. Catalysis depends on S175, which acts as the Acyl-ester intermediate.

It belongs to the amidase family. GatA subfamily. In terms of assembly, heterotrimer of A, B and C subunits.

The catalysed reaction is L-glutamyl-tRNA(Gln) + L-glutamine + ATP + H2O = L-glutaminyl-tRNA(Gln) + L-glutamate + ADP + phosphate + H(+). In terms of biological role, allows the formation of correctly charged Gln-tRNA(Gln) through the transamidation of misacylated Glu-tRNA(Gln) in organisms which lack glutaminyl-tRNA synthetase. The reaction takes place in the presence of glutamine and ATP through an activated gamma-phospho-Glu-tRNA(Gln). This chain is Glutamyl-tRNA(Gln) amidotransferase subunit A, found in Saccharophagus degradans (strain 2-40 / ATCC 43961 / DSM 17024).